We begin with the raw amino-acid sequence, 368 residues long: Glutamate 5-kinase (368 aa).

An ATP-binding site is contributed by Lys9. Ser49, Asp136, and Asn148 together coordinate substrate. Residues 168–169 (TD) and 210–216 (TGGMMTK) contribute to the ATP site. Residues 275–353 (AGIITIDNGA…ADIENVLGYE (79 aa)) enclose the PUA domain.

This sequence belongs to the glutamate 5-kinase family.

It is found in the cytoplasm. It carries out the reaction L-glutamate + ATP = L-glutamyl 5-phosphate + ADP. It participates in amino-acid biosynthesis; L-proline biosynthesis; L-glutamate 5-semialdehyde from L-glutamate: step 1/2. Functionally, catalyzes the transfer of a phosphate group to glutamate to form L-glutamate 5-phosphate. The chain is Glutamate 5-kinase from Haemophilus influenzae (strain PittEE).